The primary structure comprises 158 residues: C-type lectin TsL (158 aa).

An N-terminal signal peptide occupies residues 1–23 (MGRFIFVSFGLLVVFLSLSGAKG). Positions 24–158 (SCCTNDSLPM…KNSFLCQCKF (135 aa)) constitute a C-type lectin domain. 4 disulfide bridges follow: cysteine 26–cysteine 37, cysteine 54–cysteine 154, cysteine 61–cysteine 156, and cysteine 129–cysteine 146. Residue asparagine 28 is glycosylated (N-linked (GlcNAc...) (high mannose) asparagine). Ca(2+)-binding residues include glutamine 119, aspartate 121, glutamate 127, asparagine 142, and aspartate 143. The short motif at 119-121 (QPD) is the Galactose-binding element.

Belongs to the true venom lectin family. Homodimer; disulfide-linked. As to expression, expressed by the venom gland.

Its subcellular location is the secreted. Functionally, galactose-binding protein which recognizes specific carbohydrate structures and agglutinates a variety of animal cells by binding to cell-surface glycoproteins and glycolipids. May be a calcium-dependent lectin. This is C-type lectin TsL from Trimeresurus stejnegeri (Chinese green tree viper).